An 83-amino-acid polypeptide reads, in one-letter code: Cell division topological specificity factor (83 aa).

Belongs to the MinE family.

In terms of biological role, prevents the cell division inhibition by proteins MinC and MinD at internal division sites while permitting inhibition at polar sites. This ensures cell division at the proper site by restricting the formation of a division septum at the midpoint of the long axis of the cell. The protein is Cell division topological specificity factor of Alcanivorax borkumensis (strain ATCC 700651 / DSM 11573 / NCIMB 13689 / SK2).